A 291-amino-acid chain; its full sequence is Mitochondrial citrate transporter B (291 aa).

Solcar repeat units follow at residues Pro-10–Ser-97, Leu-105–Ser-193, and Pro-201–Leu-283. The next 6 membrane-spanning stretches (helical) occupy residues Leu-16 to Ala-36, Ser-74 to Ile-94, Val-112 to Ile-132, Thr-172 to Glu-192, Leu-203 to Ala-220, and Phe-255 to Val-276.

Belongs to the mitochondrial carrier (TC 2.A.29) family.

The protein localises to the mitochondrion inner membrane. The enzyme catalyses citrate(in) + H(+)(in) = citrate(out) + H(+)(out). Functionally, mitochondrial transporter that mediates citrate export from mitochondria to cytoplasm. Both ctpA, ctpB, and ctpD play important roles in citric acid transport across the mitochondrial membrane and function in a redundant manner. The sequence is that of Mitochondrial citrate transporter B from Aspergillus niger (strain ATCC 1015 / CBS 113.46 / FGSC A1144 / LSHB Ac4 / NCTC 3858a / NRRL 328 / USDA 3528.7).